The primary structure comprises 181 residues: Small ribosomal subunit protein cS23 (181 aa).

The tract at residues 1–40 is disordered; it reads MLPMSVHPATTPALASRPRVSLPRPSTPSSSSSLVHLKSR. Residues 14 to 36 are compositionally biased toward low complexity; the sequence is LASRPRVSLPRPSTPSSSSSLVH.

The protein belongs to the chloroplast-specific ribosomal protein cS23 family. Part of the 30S ribosomal subunit.

It is found in the plastid. Its subcellular location is the chloroplast. Its function is as follows. Component of the chloroplast ribosome (chloro-ribosome), a dedicated translation machinery responsible for the synthesis of chloroplast genome-encoded proteins, including proteins of the transcription and translation machinery and components of the photosynthetic apparatus. The chain is Small ribosomal subunit protein cS23 (PSRP3) from Hordeum vulgare (Barley).